The following is a 305-amino-acid chain: Ribonuclease BN (305 aa).

Residues H64, H66, D68, H69, H141, D212, and H270 each coordinate Zn(2+). The Proton acceptor role is filled by D68.

Belongs to the RNase Z family. RNase BN subfamily. In terms of assembly, homodimer. The cofactor is Zn(2+).

Functionally, zinc phosphodiesterase, which has both exoribonuclease and endoribonuclease activities. The polypeptide is Ribonuclease BN (Salmonella agona (strain SL483)).